The chain runs to 415 residues: Putative competence-damage inducible protein (415 aa).

The protein belongs to the CinA family.

The protein is Putative competence-damage inducible protein of Limosilactobacillus reuteri (strain DSM 20016) (Lactobacillus reuteri).